We begin with the raw amino-acid sequence, 90 residues long: Elongation factor 1-beta (90 aa).

It belongs to the EF-1-beta/EF-1-delta family.

Its function is as follows. Promotes the exchange of GDP for GTP in EF-1-alpha/GDP, thus allowing the regeneration of EF-1-alpha/GTP that could then be used to form the ternary complex EF-1-alpha/GTP/AAtRNA. The sequence is that of Elongation factor 1-beta from Desulfurococcus amylolyticus (strain DSM 18924 / JCM 16383 / VKM B-2413 / 1221n) (Desulfurococcus kamchatkensis).